We begin with the raw amino-acid sequence, 124 residues long: Large ribosomal subunit protein uL22c (124 aa).

The protein belongs to the universal ribosomal protein uL22 family. Part of the 50S ribosomal subunit.

It is found in the plastid. It localises to the chloroplast. Functionally, this protein binds specifically to 23S rRNA. In terms of biological role, the globular domain of the protein is located near the polypeptide exit tunnel on the outside of the subunit, while an extended beta-hairpin is found that lines the wall of the exit tunnel in the center of the 70S ribosome. This is Large ribosomal subunit protein uL22c (rpl22) from Amborella trichopoda.